A 212-amino-acid chain; its full sequence is Probable nicotinate-nucleotide adenylyltransferase (212 aa).

It belongs to the NadD family.

The catalysed reaction is nicotinate beta-D-ribonucleotide + ATP + H(+) = deamido-NAD(+) + diphosphate. Its pathway is cofactor biosynthesis; NAD(+) biosynthesis; deamido-NAD(+) from nicotinate D-ribonucleotide: step 1/1. Catalyzes the reversible adenylation of nicotinate mononucleotide (NaMN) to nicotinic acid adenine dinucleotide (NaAD). This chain is Probable nicotinate-nucleotide adenylyltransferase, found in Shewanella sp. (strain ANA-3).